A 201-amino-acid chain; its full sequence is Imidazoleglycerol-phosphate dehydratase (201 aa).

This sequence belongs to the imidazoleglycerol-phosphate dehydratase family.

It localises to the cytoplasm. The enzyme catalyses D-erythro-1-(imidazol-4-yl)glycerol 3-phosphate = 3-(imidazol-4-yl)-2-oxopropyl phosphate + H2O. It functions in the pathway amino-acid biosynthesis; L-histidine biosynthesis; L-histidine from 5-phospho-alpha-D-ribose 1-diphosphate: step 6/9. The protein is Imidazoleglycerol-phosphate dehydratase of Prochlorococcus marinus (strain MIT 9301).